The sequence spans 345 residues: L-threonine 3-dehydrogenase (345 aa).

Cys-39 is a Zn(2+) binding site. Catalysis depends on charge relay system residues Thr-41 and His-44. Zn(2+) contacts are provided by His-64, Glu-65, Cys-94, Cys-97, Cys-100, and Cys-108. NAD(+) contacts are provided by residues Ile-176, Asp-196, Arg-201, 263–265 (LGI), and 287–288 (VY).

It belongs to the zinc-containing alcohol dehydrogenase family. In terms of assembly, homotetramer. The cofactor is Zn(2+).

It is found in the cytoplasm. The enzyme catalyses L-threonine + NAD(+) = (2S)-2-amino-3-oxobutanoate + NADH + H(+). It functions in the pathway amino-acid degradation; L-threonine degradation via oxydo-reductase pathway; glycine from L-threonine: step 1/2. Functionally, catalyzes the NAD(+)-dependent oxidation of L-threonine to 2-amino-3-ketobutyrate. The sequence is that of L-threonine 3-dehydrogenase from Anaeromyxobacter dehalogenans (strain 2CP-1 / ATCC BAA-258).